The following is an 81-amino-acid chain: ATP synthase subunit c (81 aa).

2 helical membrane-spanning segments follow: residues proline 3 to glycine 23 and leucine 57 to alanine 77.

The protein belongs to the ATPase C chain family. F-type ATPases have 2 components, F(1) - the catalytic core - and F(0) - the membrane proton channel. F(1) has five subunits: alpha(3), beta(3), gamma(1), delta(1), epsilon(1). F(0) has four main subunits: a(1), b(1), b'(1) and c(10-14). The alpha and beta chains form an alternating ring which encloses part of the gamma chain. F(1) is attached to F(0) by a central stalk formed by the gamma and epsilon chains, while a peripheral stalk is formed by the delta, b and b' chains.

It is found in the cellular thylakoid membrane. Functionally, f(1)F(0) ATP synthase produces ATP from ADP in the presence of a proton or sodium gradient. F-type ATPases consist of two structural domains, F(1) containing the extramembraneous catalytic core and F(0) containing the membrane proton channel, linked together by a central stalk and a peripheral stalk. During catalysis, ATP synthesis in the catalytic domain of F(1) is coupled via a rotary mechanism of the central stalk subunits to proton translocation. Its function is as follows. Key component of the F(0) channel; it plays a direct role in translocation across the membrane. A homomeric c-ring of between 10-14 subunits forms the central stalk rotor element with the F(1) delta and epsilon subunits. This is ATP synthase subunit c from Trichodesmium erythraeum (strain IMS101).